The sequence spans 87 residues: HssA/B-like protein 8 (87 aa).

Polar residues predominate over residues 1–22 (MSILSALTSISNPMKSTKSSVA). Residues 1–24 (MSILSALTSISNPMKSTKSSVANG) are disordered.

Belongs to the hssA/B family.

In Dictyostelium discoideum (Social amoeba), this protein is HssA/B-like protein 8 (hssl8).